The chain runs to 30 residues: Putative alpha-amylase inhibitor (30 aa).

The protein belongs to the leguminous lectin family.

Its function is as follows. Lectin and alpha-amylase inhibitor. Acts as a defensive protein against insects. The polypeptide is Putative alpha-amylase inhibitor (Phaseolus vulgaris (Kidney bean)).